We begin with the raw amino-acid sequence, 854 residues long: Glucans biosynthesis glucosyltransferase H (854 aa).

7 consecutive transmembrane segments (helical) span residues 155–175 (ILLA…KTIL), 209–229 (ILVL…TALM), 528–548 (VFLT…FLVL), 583–603 (IALF…SVIL), 619–639 (FLSL…RMLF), 671–691 (FVRH…MAWL), and 695–715 (FLWW…VSVY).

Belongs to the glycosyltransferase 2 family. OpgH subfamily.

Its subcellular location is the cell inner membrane. The protein operates within glycan metabolism; osmoregulated periplasmic glucan (OPG) biosynthesis. Functionally, involved in the biosynthesis of osmoregulated periplasmic glucans (OPGs). This Pectobacterium atrosepticum (strain SCRI 1043 / ATCC BAA-672) (Erwinia carotovora subsp. atroseptica) protein is Glucans biosynthesis glucosyltransferase H.